The chain runs to 198 residues: DnaJ homolog subfamily C member 5 (198 aa).

Residues S8, S10, S12, and S15 each carry the phosphoserine modification. The J domain maps to 13–82 (GESLYHVLGL…RNIYDKYGSL (70 aa)). Y17 is modified (phosphotyrosine). Position 56 is an N6-acetyllysine (K56). S151 carries the post-translational modification Phosphoserine.

In terms of assembly, homodimer. Interacts with the chaperone complex consisting of HSC70 and SGTA. Interacts with ZDHHC13 (via ANK repeats). Interacts with ZDHHC17 (via ANK repeats). Interacts with SYT1, SYT5 and SYT7, and with SYT9, forming a complex with SNAP25. The interaction with SYT9 is stimulated tenfold in presence of calcium. Post-translationally, formation of the chaperone complex DNAJC5/HSC70 is not regulated by phosphorylation. Ser-10 phosphorylation induces an order-to-disorder transition triggering the interaction with Lys-58. This conformational switch modulates DNAJC5's cellular functions by reducing binding to syntaxin and synaptogamin without altering HSC70 interactions. In terms of processing, palmitoylated. Could be palmitoylated by DHHC3, DHHC7, DHHC15 and DHHC17. Palmitoylation occurs probably in the cysteine-rich domain and regulates DNAJC5 membrane attachment.

It localises to the cytoplasm. It is found in the cytosol. The protein resides in the membrane. Its subcellular location is the cytoplasmic vesicle. The protein localises to the secretory vesicle. It localises to the chromaffin granule membrane. It is found in the melanosome. The protein resides in the cell membrane. In terms of biological role, acts as a co-chaperone for the SNARE protein SNAP-25. Involved in the calcium-mediated control of a late stage of exocytosis. Acts as a general chaperone in regulated exocytosis. May have an important role in presynaptic function. May be involved in calcium-dependent neurotransmitter release at nerve endings. This Mus musculus (Mouse) protein is DnaJ homolog subfamily C member 5.